A 109-amino-acid polypeptide reads, in one-letter code: MFGKGGMGNLMKQAQMMQDKMAKVQEEIARMEVTGEAGAGLVKVTMTGSHSVRKVDIDASLLEDDKEMLEDLIAAACNDAARRVEENQKEKMAEVTGGMQLPPGMKMPF.

Residues 87-109 form a disordered region; that stretch reads NQKEKMAEVTGGMQLPPGMKMPF.

Belongs to the YbaB/EbfC family. Homodimer.

It is found in the cytoplasm. Its subcellular location is the nucleoid. In terms of biological role, binds to DNA and alters its conformation. May be involved in regulation of gene expression, nucleoid organization and DNA protection. This is Nucleoid-associated protein Spea_1509 from Shewanella pealeana (strain ATCC 700345 / ANG-SQ1).